A 1605-amino-acid polypeptide reads, in one-letter code: Zinc finger protein jing homolog (1605 aa).

The segment covering 1-15 (MQHQSLSVRNSSGIS) has biased composition (polar residues). 7 disordered regions span residues 1–28 (MQHQSLSVRNSSGISGNRDENFPSVRSS), 60–117 (QWPW…QQSN), 359–388 (TRKVSHSPQGGLGVGQPKKPVTIAPRTSDP), 441–468 (QQHQQSTQTQQQTSQNQSQPQQNQTQAQ), 856–877 (STTSSKPPPPIKPISSTEPPKL), 917–947 (TKATSTTPIKDKPKPNLPMSEPPALAPASCT), and 991–1213 (NDSG…TDFL). The span at 64 to 117 (NTSNNTNATNSNNVQSNNNSSTATSNSSTNSNNSPAVNTPTTQNQSQPTTQQSN) shows a compositional bias: low complexity. Positions 991 to 1000 (NDSGIVANSS) are enriched in polar residues. The span at 1021–1030 (PQKKDEESRQ) shows a compositional bias: basic and acidic residues. Residues 1035–1049 (SPVPSPSPLSEPPVI) are compositionally biased toward pro residues. Composition is skewed to acidic residues over residues 1053 to 1090 (SEPEPEPEPELEPEPEMEPEPETEPEPEVEPEPEDEPH) and 1099 to 1110 (SSEAVELPELED). Pro residues predominate over residues 1112–1126 (QPSPPLPCELPPPPT). A compositionally biased stretch (low complexity) spans 1135–1149 (LSLPPSQKSPKSLLL). Residues 1165-1201 (QESMSSDQDYSNQSPLDESSPTGSAEPSESQRSTTPV) show a composition bias toward polar residues. A C2H2-type 1 zinc finger spans residues 1260 to 1285 (GVCYWSNCDAQFDTSSKLLDHLQIQH). Residues 1293 to 1320 (FACLWDGCKVHNKESCSRRWLERHVLSH) form a C2H2-type 2; degenerate zinc finger. The segment at 1326–1350 (HKCIVAGCGMRFGSQLALEKHVNHH) adopts a C2H2-type 3 zinc-finger fold. Disordered stretches follow at residues 1352–1371 (NNTDNASAGKRSSDPPLPKV) and 1511–1605 (CSRS…SSTS). 2 stretches are compositionally biased toward low complexity: residues 1511 to 1537 (CSRSSFSSSSSSSSSSGCSSASSSLIS) and 1556 to 1605 (KQSY…SSTS).

The protein belongs to the AEBP2/jing C2H2-type zinc-finger family.

Its subcellular location is the nucleus. In terms of biological role, may functionally interact with Polycomb group (PcG) and trithorax group (trxG) proteins to repress transcription. The protein is Zinc finger protein jing homolog of Aedes aegypti (Yellowfever mosquito).